Consider the following 498-residue polypeptide: Ammonium transporter 1 member 3 (498 aa).

11 helical membrane-spanning segments follow: residues 41 to 61, 76 to 96, 122 to 142, 150 to 170, 194 to 214, 238 to 258, 277 to 299, 307 to 327, 329 to 349, 362 to 382, and 414 to 434; these read LLFS…LCAG, VLDA…FAFG, FFLF…GSIA, YLIY…HWFW, FAGS…GAFI, LVVL…PGSF, AVGR…TLYG, WNVT…TAGC, VVDP…LIGC, LEAT…TALF, and IVQI…LFYV. Positions 473 to 498 are disordered; the sequence is RAKSAAETARVEPRKSPEQAAAGQFV.

Belongs to the ammonia transporter channel (TC 1.A.11.2) family. As to expression, expressed in roots.

It localises to the membrane. Ammonium transporter probably involved in ammonium uptake from the soil. In Oryza sativa subsp. japonica (Rice), this protein is Ammonium transporter 1 member 3 (AMT1-3).